Here is a 253-residue protein sequence, read N- to C-terminus: 5'-nucleotidase SurE (253 aa).

The a divalent metal cation site is built by Asp8, Asp9, Ser39, and Asn95.

This sequence belongs to the SurE nucleotidase family. The cofactor is a divalent metal cation.

The protein localises to the cytoplasm. It carries out the reaction a ribonucleoside 5'-phosphate + H2O = a ribonucleoside + phosphate. Nucleotidase that shows phosphatase activity on nucleoside 5'-monophosphates. The chain is 5'-nucleotidase SurE from Kosmotoga olearia (strain ATCC BAA-1733 / DSM 21960 / TBF 19.5.1).